Here is a 341-residue protein sequence, read N- to C-terminus: Mitochondrial transcription factor 1 (341 aa).

S-adenosyl-L-methionine-binding residues include L23, E77, D101, and N137.

Belongs to the class I-like SAM-binding methyltransferase superfamily. rRNA adenine N(6)-methyltransferase family.

It localises to the mitochondrion. Mitochondrial transcription factor that confers selective promoter recognition on the core subunit of the yeast mitochondrial RNA polymerase. Interacts with DNA in a non-specific manner. The polypeptide is Mitochondrial transcription factor 1 (MTF1) (Saccharomyces paradoxus (Yeast)).